A 159-amino-acid polypeptide reads, in one-letter code: 6,7-dimethyl-8-ribityllumazine synthase (159 aa).

Residues Phe-22, Ala-57–Glu-59, and Ala-81–Ile-83 contribute to the 5-amino-6-(D-ribitylamino)uracil site. Gly-86–Thr-87 lines the (2S)-2-hydroxy-3-oxobutyl phosphate pocket. Residue His-89 is the Proton donor of the active site. A 5-amino-6-(D-ribitylamino)uracil-binding site is contributed by Phe-114. Position 128 (Arg-128) interacts with (2S)-2-hydroxy-3-oxobutyl phosphate.

It belongs to the DMRL synthase family. In terms of assembly, forms an icosahedral capsid composed of 60 subunits, arranged as a dodecamer of pentamers.

It catalyses the reaction (2S)-2-hydroxy-3-oxobutyl phosphate + 5-amino-6-(D-ribitylamino)uracil = 6,7-dimethyl-8-(1-D-ribityl)lumazine + phosphate + 2 H2O + H(+). Its pathway is cofactor biosynthesis; riboflavin biosynthesis; riboflavin from 2-hydroxy-3-oxobutyl phosphate and 5-amino-6-(D-ribitylamino)uracil: step 1/2. In terms of biological role, catalyzes the formation of 6,7-dimethyl-8-ribityllumazine by condensation of 5-amino-6-(D-ribitylamino)uracil with 3,4-dihydroxy-2-butanone 4-phosphate. This is the penultimate step in the biosynthesis of riboflavin. The protein is 6,7-dimethyl-8-ribityllumazine synthase of Shewanella baltica (strain OS155 / ATCC BAA-1091).